An 889-amino-acid chain; its full sequence is Cytoplasmic aconitate hydratase (889 aa).

Substrate contacts are provided by residues Gln-86 and 205 to 207 (DSH). 3 residues coordinate [4Fe-4S] cluster: Cys-437, Cys-503, and Cys-506. Residues Arg-536, Arg-541, Arg-699, and 779–780 (SR) contribute to the substrate site.

The protein belongs to the aconitase/IPM isomerase family. In terms of assembly, interacts (when associated with the 4Fe-4S) with FBXL5. Interacts with frataxin(81-210). The cofactor is [4Fe-4S] cluster.

The protein localises to the cytoplasm. Its subcellular location is the cytosol. It catalyses the reaction citrate = D-threo-isocitrate. Functionally, bifunctional iron sensor that switches between 2 activities depending on iron availability. Iron deprivation, promotes its mRNA binding activity through which it regulates the expression of genes involved in iron uptake, sequestration and utilization. Binds to iron-responsive elements (IRES) in the untranslated region of target mRNAs preventing for instance the translation of ferritin and aminolevulinic acid synthase and stabilizing the transferrin receptor mRNA. Conversely, when cellular iron levels are high, binds a 4Fe-4S cluster which precludes RNA binding activity and promotes the aconitase activity, the isomerization of citrate to isocitrate via cis-aconitate. In Oryctolagus cuniculus (Rabbit), this protein is Cytoplasmic aconitate hydratase (ACO1).